The sequence spans 446 residues: Probable glycine dehydrogenase (decarboxylating) subunit 1 (446 aa).

It belongs to the GcvP family. N-terminal subunit subfamily. The glycine cleavage system is composed of four proteins: P, T, L and H. In this organism, the P 'protein' is a heterodimer of two subunits.

It carries out the reaction N(6)-[(R)-lipoyl]-L-lysyl-[glycine-cleavage complex H protein] + glycine + H(+) = N(6)-[(R)-S(8)-aminomethyldihydrolipoyl]-L-lysyl-[glycine-cleavage complex H protein] + CO2. Its function is as follows. The glycine cleavage system catalyzes the degradation of glycine. The P protein binds the alpha-amino group of glycine through its pyridoxal phosphate cofactor; CO(2) is released and the remaining methylamine moiety is then transferred to the lipoamide cofactor of the H protein. The chain is Probable glycine dehydrogenase (decarboxylating) subunit 1 from Xanthobacter autotrophicus (strain ATCC BAA-1158 / Py2).